The chain runs to 145 residues: D-aminoacyl-tRNA deacylase (145 aa).

The Gly-cisPro motif, important for rejection of L-amino acids motif lies at 137–138 (GP).

The protein belongs to the DTD family. Homodimer.

It is found in the cytoplasm. The catalysed reaction is glycyl-tRNA(Ala) + H2O = tRNA(Ala) + glycine + H(+). It catalyses the reaction a D-aminoacyl-tRNA + H2O = a tRNA + a D-alpha-amino acid + H(+). Its function is as follows. An aminoacyl-tRNA editing enzyme that deacylates mischarged D-aminoacyl-tRNAs. Also deacylates mischarged glycyl-tRNA(Ala), protecting cells against glycine mischarging by AlaRS. Acts via tRNA-based rather than protein-based catalysis; rejects L-amino acids rather than detecting D-amino acids in the active site. By recycling D-aminoacyl-tRNA to D-amino acids and free tRNA molecules, this enzyme counteracts the toxicity associated with the formation of D-aminoacyl-tRNA entities in vivo and helps enforce protein L-homochirality. In Pseudomonas savastanoi pv. phaseolicola (strain 1448A / Race 6) (Pseudomonas syringae pv. phaseolicola (strain 1448A / Race 6)), this protein is D-aminoacyl-tRNA deacylase.